A 97-amino-acid polypeptide reads, in one-letter code: Large ribosomal subunit protein uL23 (97 aa).

Belongs to the universal ribosomal protein uL23 family. Part of the 50S ribosomal subunit. Contacts protein L29, and trigger factor when it is bound to the ribosome.

Functionally, one of the early assembly proteins it binds 23S rRNA. One of the proteins that surrounds the polypeptide exit tunnel on the outside of the ribosome. Forms the main docking site for trigger factor binding to the ribosome. In Brucella canis (strain ATCC 23365 / NCTC 10854 / RM-666), this protein is Large ribosomal subunit protein uL23.